Here is a 405-residue protein sequence, read N- to C-terminus: Serine/threonine transporter SstT (405 aa).

8 helical membrane passes run 13-33 (GGSLVLQIFVGIIAGVALAGF), 43-63 (FLGDLFVGALKAIAPVLVFVL), 82-102 (IILLYLVGTFAAALTAVLMSF), 141-161 (ALINANYIGLLAWGVGLGIAL), 185-205 (FVICLAPIGIFGLVAATIAQT), 217-237 (LGVLLGAMAVIAFVVNPLIVF), 298-318 (MAGAAITITVLTLAAVHTLGI), and 339-359 (ASGVAGGSLLLIPLACSLFGI).

The protein belongs to the dicarboxylate/amino acid:cation symporter (DAACS) (TC 2.A.23) family.

The protein resides in the cell inner membrane. It carries out the reaction L-serine(in) + Na(+)(in) = L-serine(out) + Na(+)(out). The enzyme catalyses L-threonine(in) + Na(+)(in) = L-threonine(out) + Na(+)(out). Involved in the import of serine and threonine into the cell, with the concomitant import of sodium (symport system). This chain is Serine/threonine transporter SstT, found in Shewanella amazonensis (strain ATCC BAA-1098 / SB2B).